A 99-amino-acid chain; its full sequence is Large ribosomal subunit protein uL23 (99 aa).

This sequence belongs to the universal ribosomal protein uL23 family. Part of the 50S ribosomal subunit. Contacts protein L29, and trigger factor when it is bound to the ribosome.

In terms of biological role, one of the early assembly proteins it binds 23S rRNA. One of the proteins that surrounds the polypeptide exit tunnel on the outside of the ribosome. Forms the main docking site for trigger factor binding to the ribosome. The polypeptide is Large ribosomal subunit protein uL23 (Leifsonia xyli subsp. xyli (strain CTCB07)).